The following is a 326-amino-acid chain: Biotin synthase (326 aa).

Residues 47–274 (NEVQVSSLLS…ASRVRLSAGR (228 aa)) enclose the Radical SAM core domain. [4Fe-4S] cluster is bound by residues Cys62, Cys66, and Cys69. Residues Cys106, Cys137, Cys197, and Arg269 each coordinate [2Fe-2S] cluster.

The protein belongs to the radical SAM superfamily. Biotin synthase family. As to quaternary structure, homodimer. Requires [4Fe-4S] cluster as cofactor. [2Fe-2S] cluster is required as a cofactor.

It catalyses the reaction (4R,5S)-dethiobiotin + (sulfur carrier)-SH + 2 reduced [2Fe-2S]-[ferredoxin] + 2 S-adenosyl-L-methionine = (sulfur carrier)-H + biotin + 2 5'-deoxyadenosine + 2 L-methionine + 2 oxidized [2Fe-2S]-[ferredoxin]. Its pathway is cofactor biosynthesis; biotin biosynthesis; biotin from 7,8-diaminononanoate: step 2/2. Its function is as follows. Catalyzes the conversion of dethiobiotin (DTB) to biotin by the insertion of a sulfur atom into dethiobiotin via a radical-based mechanism. In Methylococcus capsulatus (strain ATCC 33009 / NCIMB 11132 / Bath), this protein is Biotin synthase.